An 89-amino-acid chain; its full sequence is Small ribosomal subunit protein uS17 (89 aa).

The protein belongs to the universal ribosomal protein uS17 family. Part of the 30S ribosomal subunit.

Functionally, one of the primary rRNA binding proteins, it binds specifically to the 5'-end of 16S ribosomal RNA. The polypeptide is Small ribosomal subunit protein uS17 (Coxiella burnetii (strain RSA 493 / Nine Mile phase I)).